We begin with the raw amino-acid sequence, 267 residues long: Neural/ectodermal development factor IMP-L2 (267 aa).

The signal sequence occupies residues 1–25 (MEAKMNLHVCALALLLFGSIATVRG). Ig-like C2-type domains are found at residues 48 to 149 (PRNR…KTIY) and 174 to 260 (PRII…TFVY). Cystine bridges form between Cys-80–Cys-139 and Cys-195–Cys-244.

Detected in several sites including the ventral neuroectoderm, the tracheal pits, the pharynx and esophagus, and specific neuronal cell bodies, where it is primarily expressed.

It is found in the secreted. The protein localises to the extracellular space. In terms of biological role, essential developmental role during embryogenesis, in particular the normal development of the nervous system. May be involved in some aspect of cell adhesion. This chain is Neural/ectodermal development factor IMP-L2 (ImpL2), found in Drosophila melanogaster (Fruit fly).